Reading from the N-terminus, the 133-residue chain is Adenosine 5'-monophosphoramidase hnt1 (133 aa).

Residues 4–107 (IFCKIVKGDI…IPKPNEEYGL (104 aa)) enclose the HIT domain. Residues 29–30 (DI), N81, 87–89 (HQF), and 94–96 (HFH) each bind AMP. The short motif at 92-96 (HVHFH) is the Histidine triad motif element. H94 (tele-AMP-histidine intermediate) is an active-site residue.

This sequence belongs to the HINT family. In terms of assembly, homodimer. It depends on Mg(2+) as a cofactor.

The protein localises to the nucleus. It carries out the reaction adenosine 5'-phosphoramidate + H2O = AMP + NH4(+). Its function is as follows. Hydrolyzes adenosine 5'-monophosphoramidate substrates such as AMP-morpholidate, AMP-N-alanine methyl ester, AMP-alpha-acetyl lysine methyl ester and AMP-NH2. In Schizosaccharomyces pombe (strain 972 / ATCC 24843) (Fission yeast), this protein is Adenosine 5'-monophosphoramidase hnt1 (hnt1).